The chain runs to 279 residues: Tryptophan synthase alpha chain (279 aa).

Active-site proton acceptor residues include Glu50 and Asp61.

It belongs to the TrpA family. Tetramer of two alpha and two beta chains.

It carries out the reaction (1S,2R)-1-C-(indol-3-yl)glycerol 3-phosphate + L-serine = D-glyceraldehyde 3-phosphate + L-tryptophan + H2O. The protein operates within amino-acid biosynthesis; L-tryptophan biosynthesis; L-tryptophan from chorismate: step 5/5. The alpha subunit is responsible for the aldol cleavage of indoleglycerol phosphate to indole and glyceraldehyde 3-phosphate. The sequence is that of Tryptophan synthase alpha chain from Mesorhizobium japonicum (strain LMG 29417 / CECT 9101 / MAFF 303099) (Mesorhizobium loti (strain MAFF 303099)).